A 209-amino-acid polypeptide reads, in one-letter code: Chloramphenicol acetyltransferase (209 aa).

His78 is an active-site residue.

It belongs to the transferase hexapeptide repeat family.

The enzyme catalyses chloramphenicol + acetyl-CoA = chloramphenicol 3-acetate + CoA. This enzyme is an effector of chloramphenicol resistance in bacteria. In Agrobacterium fabrum (strain C58 / ATCC 33970) (Agrobacterium tumefaciens (strain C58)), this protein is Chloramphenicol acetyltransferase (cat).